Consider the following 101-residue polypeptide: MIFEHALVLSAFLFSIGIYGLITSRNMVRALMCLELILNAVNINLVTFSDFFDRRQLKGNIFSIFVIAVAAAEAAIGPAIVSSIYRNRKSTRINQSNLLNK.

The next 3 helical transmembrane spans lie at 2-22, 32-52, and 61-81; these read IFEHALVLSAFLFSIGIYGLI, MCLELILNAVNINLVTFSDFF, and IFSIFVIAVAAAEAAIGPAIV.

The protein belongs to the complex I subunit 4L family. As to quaternary structure, NDH is composed of at least 16 different subunits, 5 of which are encoded in the nucleus.

The protein localises to the plastid. The protein resides in the chloroplast thylakoid membrane. It carries out the reaction a plastoquinone + NADH + (n+1) H(+)(in) = a plastoquinol + NAD(+) + n H(+)(out). The enzyme catalyses a plastoquinone + NADPH + (n+1) H(+)(in) = a plastoquinol + NADP(+) + n H(+)(out). Its function is as follows. NDH shuttles electrons from NAD(P)H:plastoquinone, via FMN and iron-sulfur (Fe-S) centers, to quinones in the photosynthetic chain and possibly in a chloroplast respiratory chain. The immediate electron acceptor for the enzyme in this species is believed to be plastoquinone. Couples the redox reaction to proton translocation, and thus conserves the redox energy in a proton gradient. This Phaseolus vulgaris (Kidney bean) protein is NAD(P)H-quinone oxidoreductase subunit 4L, chloroplastic.